Here is a 288-residue protein sequence, read N- to C-terminus: ATP synthase gamma chain (288 aa).

Belongs to the ATPase gamma chain family. As to quaternary structure, F-type ATPases have 2 components, CF(1) - the catalytic core - and CF(0) - the membrane proton channel. CF(1) has five subunits: alpha(3), beta(3), gamma(1), delta(1), epsilon(1). CF(0) has three main subunits: a, b and c.

It localises to the cell inner membrane. Functionally, produces ATP from ADP in the presence of a proton gradient across the membrane. The gamma chain is believed to be important in regulating ATPase activity and the flow of protons through the CF(0) complex. This is ATP synthase gamma chain from Legionella pneumophila (strain Corby).